Reading from the N-terminus, the 100-residue chain is Urease subunit gamma (100 aa).

Belongs to the urease gamma subunit family. In terms of assembly, heterotrimer of UreA (gamma), UreB (beta) and UreC (alpha) subunits. Three heterotrimers associate to form the active enzyme.

It is found in the cytoplasm. It carries out the reaction urea + 2 H2O + H(+) = hydrogencarbonate + 2 NH4(+). Its pathway is nitrogen metabolism; urea degradation; CO(2) and NH(3) from urea (urease route): step 1/1. This chain is Urease subunit gamma, found in Cupriavidus metallidurans (strain ATCC 43123 / DSM 2839 / NBRC 102507 / CH34) (Ralstonia metallidurans).